The following is a 121-amino-acid chain: Large ribosomal subunit protein eL34B (121 aa).

This sequence belongs to the eukaryotic ribosomal protein eL34 family. As to quaternary structure, component of the large ribosomal subunit (LSU). Mature yeast ribosomes consist of a small (40S) and a large (60S) subunit. The 40S small subunit contains 1 molecule of ribosomal RNA (18S rRNA) and 33 different proteins (encoded by 57 genes). The large 60S subunit contains 3 rRNA molecules (25S, 5.8S and 5S rRNA) and 46 different proteins (encoded by 81 genes).

It localises to the cytoplasm. Component of the ribosome, a large ribonucleoprotein complex responsible for the synthesis of proteins in the cell. The small ribosomal subunit (SSU) binds messenger RNAs (mRNAs) and translates the encoded message by selecting cognate aminoacyl-transfer RNA (tRNA) molecules. The large subunit (LSU) contains the ribosomal catalytic site termed the peptidyl transferase center (PTC), which catalyzes the formation of peptide bonds, thereby polymerizing the amino acids delivered by tRNAs into a polypeptide chain. The nascent polypeptides leave the ribosome through a tunnel in the LSU and interact with protein factors that function in enzymatic processing, targeting, and the membrane insertion of nascent chains at the exit of the ribosomal tunnel. The polypeptide is Large ribosomal subunit protein eL34B (Saccharomyces cerevisiae (strain ATCC 204508 / S288c) (Baker's yeast)).